Reading from the N-terminus, the 452-residue chain is Tubulin alpha-8 chain (452 aa).

Positions 15, 74, 143, 147, 148, 182, 209, and 231 each coordinate GTP. Glu74 provides a ligand contact to Mg(2+). Glu257 is an active-site residue.

This sequence belongs to the tubulin family. As to quaternary structure, dimer of alpha and beta chains. A typical microtubule is a hollow water-filled tube with an outer diameter of 25 nm and an inner diameter of 15 nM. Alpha-beta heterodimers associate head-to-tail to form protofilaments running lengthwise along the microtubule wall with the beta-tubulin subunit facing the microtubule plus end conferring a structural polarity. Microtubules usually have 13 protofilaments but different protofilament numbers can be found in some organisms and specialized cells. Mg(2+) is required as a cofactor.

Its subcellular location is the cytoplasm. The protein localises to the cytoskeleton. The catalysed reaction is GTP + H2O = GDP + phosphate + H(+). Functionally, tubulin is the major constituent of microtubules, a cylinder consisting of laterally associated linear protofilaments composed of alpha- and beta-tubulin heterodimers. Microtubules grow by the addition of GTP-tubulin dimers to the microtubule end, where a stabilizing cap forms. Below the cap, tubulin dimers are in GDP-bound state, owing to GTPase activity of alpha-tubulin. The sequence is that of Tubulin alpha-8 chain (tba-8) from Caenorhabditis elegans.